Reading from the N-terminus, the 2193-residue chain is Genome polyprotein (2193 aa).

Gly-2 is lipidated: N-myristoyl glycine; by host. Residues 2–1503 (GAQVSTQKTG…HVSRAFICLQ (1502 aa)) are Cytoplasmic-facing. The amphipathic alpha-helix stretch occupies residues 565–582 (QLLQGDVEEAVNRAVARV). Active-site for protease 2A activity residues include His-880 and Asp-898. Zn(2+) contacts are provided by Cys-915 and Cys-917. The For protease 2A activity role is filled by Cys-969. Zn(2+)-binding residues include Cys-975 and His-977. The tract at residues 1109–1181 (SNGWLKKFTE…EQSAPSQSDQ (73 aa)) is membrane-binding. The interval 1109 to 1247 (SNGWLKKFTE…SPGAGKSVAT (139 aa)) is oligomerization. Residues 1130 to 1134 (AIKIQ) form an RNA-binding region. An SF3 helicase domain is found at 1213–1369 (EKKMSNYIQF…SMYSQNGKIN (157 aa)). Zn(2+) is bound by residues Cys-1377, Cys-1389, and Cys-1394. The C4-type; degenerate zinc-finger motif lies at 1377-1394 (CDEECCPVNFKRCCPLVC). Residues 1421–1428 (EYNHRHSV) are RNA-binding. An oligomerization region spans residues 1432–1437 (LEALFQ). The stretch at 1504 to 1519 (ALTTFVSVAGIIYIIY) is an intramembrane region. The Cytoplasmic portion of the chain corresponds to 1520–2193 (KLFAGFQGAY…TLRRKWLDSF (674 aa)). Tyr-1529 is subject to O-(5'-phospho-RNA)-tyrosine. In terms of domain architecture, Peptidase C3 spans 1549-1727 (GPAFEFAVAM…FSAALLRHYF (179 aa)). Catalysis depends on for protease 3C activity residues His-1588, Glu-1619, and Cys-1695. The 117-residue stretch at 1958 to 2074 (GHLIAFDYSG…SYPWPIDASL (117 aa)) folds into the RdRp catalytic domain. Residues Asp-1964 and Asp-2060 each contribute to the Mg(2+) site.

It belongs to the picornaviruses polyprotein family. Interacts with capsid protein VP1 and capsid protein VP3 to form heterotrimeric protomers. In terms of assembly, interacts with capsid protein VP0, and capsid protein VP3 to form heterotrimeric protomers. Five protomers subsequently associate to form pentamers which serve as building blocks for the capsid. Interacts with capsid protein VP2, capsid protein VP3 and capsid protein VP4 following cleavage of capsid protein VP0. As to quaternary structure, interacts with capsid protein VP1 and capsid protein VP3 in the mature capsid. Interacts with host CD55; this interaction promotes virus attachment to the host cell and subsequent internalization. Interacts with capsid protein VP0 and capsid protein VP1 to form heterotrimeric protomers. Five protomers subsequently associate to form pentamers which serve as building blocks for the capsid. Interacts with capsid protein VP4 in the mature capsid. Interacts with protein 2C; this interaction may be important for virion morphogenesis. Interacts with host CD55; this interaction promotes virus attachment to the host cell and subsequent internalization. In terms of assembly, interacts with capsid protein VP1 and capsid protein VP3. As to quaternary structure, homodimer. Homohexamer; forms a hexameric ring structure with 6-fold symmetry characteristic of AAA+ ATPases. Interacts (via N-terminus) with host RTN3 (via reticulon domain); this interaction is important for viral replication. Interacts with capsid protein VP3; this interaction may be important for virion morphogenesis. In terms of assembly, interacts with protein 3CD. As to quaternary structure, homodimer. Interacts with host GBF1. Interacts (via GOLD domain) with host ACBD3 (via GOLD domain); this interaction allows the formation of a viral protein 3A/ACBD3 heterotetramer with a 2:2 stoichiometry, which will stimulate the recruitment of host PI4KB in order to synthesize PI4P at the viral RNA replication sites. Interacts with RNA-directed RNA polymerase. In terms of assembly, interacts with protein 3AB and with RNA-directed RNA polymerase. As to quaternary structure, interacts with Viral protein genome-linked and with protein 3CD. It depends on Mg(2+) as a cofactor. In terms of processing, specific enzymatic cleavages in vivo by the viral proteases yield processing intermediates and the mature proteins. Myristoylation is required for the formation of pentamers during virus assembly. Further assembly of 12 pentamers and a molecule of genomic RNA generates the provirion. Post-translationally, during virion maturation, immature virions are rendered infectious following cleavage of VP0 into VP4 and VP2. This maturation seems to be an autocatalytic event triggered by the presence of RNA in the capsid and it is followed by a conformational change infectious virion. In terms of processing, myristoylation is required during RNA encapsidation and formation of the mature virus particle. VPg is uridylylated by the polymerase into VPg-pUpU. This acts as a nucleotide-peptide primer for the genomic RNA replication.

It localises to the virion. The protein resides in the host cytoplasm. The protein localises to the host cytoplasmic vesicle membrane. It is found in the host nucleus. The catalysed reaction is a ribonucleoside 5'-triphosphate + H2O = a ribonucleoside 5'-diphosphate + phosphate + H(+). It carries out the reaction Selective cleavage of Tyr-|-Gly bond in the picornavirus polyprotein.. The enzyme catalyses RNA(n) + a ribonucleoside 5'-triphosphate = RNA(n+1) + diphosphate. It catalyses the reaction Selective cleavage of Gln-|-Gly bond in the poliovirus polyprotein. In other picornavirus reactions Glu may be substituted for Gln, and Ser or Thr for Gly.. Replication or transcription is subject to high level of random mutations by the nucleotide analog ribavirin. Forms an icosahedral capsid of pseudo T=3 symmetry with capsid proteins VP2 and VP3. The capsid is 300 Angstroms in diameter, composed of 60 copies of each capsid protein and enclosing the viral positive strand RNA genome. Capsid protein VP1 mainly forms the vertices of the capsid. Capsid protein VP1 interacts with host cell receptor to provide virion attachment to target host cells. This attachment induces virion internalization. Tyrosine kinases are probably involved in the entry process. After binding to its receptor, the capsid undergoes conformational changes. Capsid protein VP1 N-terminus (that contains an amphipathic alpha-helix) and capsid protein VP4 are externalized. Together, they shape a pore in the host membrane through which viral genome is translocated to host cell cytoplasm. In terms of biological role, forms an icosahedral capsid of pseudo T=3 symmetry with capsid proteins VP2 and VP3. The capsid is 300 Angstroms in diameter, composed of 60 copies of each capsid protein and enclosing the viral positive strand RNA genome. Functionally, lies on the inner surface of the capsid shell. After binding to the host receptor, the capsid undergoes conformational changes. Capsid protein VP4 is released, Capsid protein VP1 N-terminus is externalized, and together, they shape a pore in the host membrane through which the viral genome is translocated into the host cell cytoplasm. Its function is as follows. Component of immature procapsids, which is cleaved into capsid proteins VP4 and VP2 after maturation. Allows the capsid to remain inactive before the maturation step. Cysteine protease that cleaves viral polyprotein and specific host proteins. It is responsible for the autocatalytic cleavage between the P1 and P2 regions, which is the first cleavage occurring in the polyprotein. Also cleaves the host translation initiation factor EIF4G1, in order to shut down the capped cellular mRNA translation. Inhibits the host nucleus-cytoplasm protein and RNA trafficking by cleaving host members of the nuclear pores. Counteracts stress granule formation probably by antagonizing its assembly or promoting its dissassembly. In terms of biological role, plays an essential role in the virus replication cycle by acting as a viroporin. Creates a pore in the host endoplasmic reticulum and as a consequence releases Ca2+ in the cytoplasm of infected cell. In turn, high levels of cytoplasmic calcium may trigger membrane trafficking and transport of viral ER-associated proteins to viroplasms, sites of viral genome replication. Functionally, induces and associates with structural rearrangements of intracellular membranes. Displays RNA-binding, nucleotide binding and NTPase activities. May play a role in virion morphogenesis and viral RNA encapsidation by interacting with the capsid protein VP3. Its function is as follows. Localizes the viral replication complex to the surface of membranous vesicles. Together with protein 3CD binds the Cis-Active RNA Element (CRE) which is involved in RNA synthesis initiation. Acts as a cofactor to stimulate the activity of 3D polymerase, maybe through a nucleid acid chaperone activity. Localizes the viral replication complex to the surface of membranous vesicles. It inhibits host cell endoplasmic reticulum-to-Golgi apparatus transport and causes the disassembly of the Golgi complex, possibly through GBF1 interaction. This would result in depletion of MHC, trail receptors and IFN receptors at the host cell surface. Plays an essential role in viral RNA replication by recruiting ACBD3 and PI4KB at the viral replication sites, thereby allowing the formation of the rearranged membranous structures where viral replication takes place. In terms of biological role, acts as a primer for viral RNA replication and remains covalently bound to viral genomic RNA. VPg is uridylylated prior to priming replication into VPg-pUpU. The oriI viral genomic sequence may act as a template for this. The VPg-pUpU is then used as primer on the genomic RNA poly(A) by the RNA-dependent RNA polymerase to replicate the viral genome. During genome replication, the VPg-RNA linkage is removed by the host TDP2, thereby accelerating replication. During the late stage of the replication cycle, host TDP2 is excluded from sites of viral RNA synthesis and encapsidation, allowing for the generation of progeny virions. Functionally, involved in the viral replication complex and viral polypeptide maturation. It exhibits protease activity with a specificity and catalytic efficiency that is different from protease 3C. Protein 3CD lacks polymerase activity. Protein 3CD binds to the 5'UTR of the viral genome. Its function is as follows. Replicates the viral genomic RNA on the surface of intracellular membranes. May form linear arrays of subunits that propagate along a strong head-to-tail interaction called interface-I. Covalently attaches UMP to a tyrosine of VPg, which is used to prime RNA synthesis. The positive stranded RNA genome is first replicated at virus induced membranous vesicles, creating a dsRNA genomic replication form. This dsRNA is then used as template to synthesize positive stranded RNA genomes. ss(+)RNA genomes are either translated, replicated or encapsidated. Major viral protease that mediates proteolytic processing of the polyprotein. Cleaves host EIF5B, contributing to host translation shutoff. Also cleaves host PABPC1, contributing to host translation shutoff. Cleaves host NLRP1, triggers host N-glycine-mediated degradation of the autoinhibitory NLRP1 N-terminal fragment. The protein is Genome polyprotein of Echovirus 12 (strain Travis).